The chain runs to 181 residues: Ribulose bisphosphate carboxylase small subunit 3B, chloroplastic (181 aa).

The transit peptide at 1 to 54 directs the protein to the chloroplast; it reads MASSMLSSAAVVTSPAQATMVAPFTGLKSSAAFPVTRKTNKDITSIASNGGRVS.

This sequence belongs to the RuBisCO small chain family. As to quaternary structure, heterohexadecamer of 8 large and 8 small subunits.

The protein resides in the plastid. It is found in the chloroplast. In terms of biological role, ruBisCO catalyzes two reactions: the carboxylation of D-ribulose 1,5-bisphosphate, the primary event in carbon dioxide fixation, as well as the oxidative fragmentation of the pentose substrate. Both reactions occur simultaneously and in competition at the same active site. Although the small subunit is not catalytic it is essential for maximal activity. The chain is Ribulose bisphosphate carboxylase small subunit 3B, chloroplastic (RBCS-3B) from Arabidopsis thaliana (Mouse-ear cress).